Here is a 243-residue protein sequence, read N- to C-terminus: Large ribosomal subunit protein uL30 (243 aa).

The disordered stretch occupies residues 1–31; it reads MADKILTPESQLKKSKAQQKSAEQVAAERAA. Residues 18–28 show a composition bias toward low complexity; it reads QQKSAEQVAAE.

Belongs to the universal ribosomal protein uL30 family.

The protein is Large ribosomal subunit protein uL30 (RPL7) of Eremothecium gossypii (strain ATCC 10895 / CBS 109.51 / FGSC 9923 / NRRL Y-1056) (Yeast).